The sequence spans 190 residues: MMIYGLIACLIFVTSSIASPLYIPVIPPISEDKSFNSVEVLVSLFRDDQKDYTVTSQFNNYTIDTKDWTIGVLSTPDGLDIPLTNITYWSRFTIGRALFKSESEDIFQKKMSILGVSIECKKSSTLLTFLTVRKMTRVFNKFPDMAYYRGDCLKAVYVTMTYKNTKTGETDYTYLSNGGLPAYYRNGVDG.

It belongs to the orthopoxvirus OPG209 protein family.

The sequence is that of Protein OPG209 (OPG209) from Bos taurus (Bovine).